Consider the following 385-residue polypeptide: F-box only protein 4 (385 aa).

A phosphoserine mark is found at serine 11 and serine 46. One can recognise an F-box domain in the interval 54 to 100 (TSALTRLPVDVQLYILSFLSPHDLCQLGSTDHYWNKTIRDPILWRYF).

Homodimer. Part of the SCF (SKP1-CUL1-F-box) E3 ubiquitin-protein ligase complex SCF(FBXO4) formed of CUL1, SKP1, RBX1 and FBXO4. Interacts with TERF1; this interaction is prevented in the presence of GNL3L. Identified in a complex with CRYAB and CCND1. In terms of processing, phosphorylation at Ser-11 varies during the cell cycle. It is low in resting cells and high in the S phase and the G2/M phase of the cell cycle. Phosphorylation is decreased during late G1 phase. Phosphorylation at Ser-11 is important for homodimerization and for optimal ubiquitin ligase activity towards CCND1.

The protein localises to the cytoplasm. The protein operates within protein modification; protein ubiquitination. In terms of biological role, substrate recognition component of a SCF (SKP1-CUL1-F-box protein) E3 ubiquitin-protein ligase complex that mediates the ubiquitination and subsequent proteasomal degradation of target proteins. Promotes ubiquitination of cyclin-D1 (CCND1) and its subsequent proteasomal degradation. However, it does not act as a major regulator of CCND1 stability during the G1/S transition. Recognizes TERF1 and promotes its ubiquitination together with UBE2D1. Promotes ubiquitination of FXR1 following phosphorylation of FXR1 by GSK3B, leading to FXR1 degradation by the proteasome. This is F-box only protein 4 from Mus musculus (Mouse).